Reading from the N-terminus, the 1048-residue chain is Selenate reductase subunit A (1048 aa).

A signal peptide (tat-type signal) is located at residues 1-39 (MENQHQKFISRRNFIKTSALLGGTAFLGTGLPNIKKTYS). The 74-residue stretch at 56-129 (ENILYSACLQ…AGIQHAYDPY (74 aa)) folds into the 4Fe-4S Mo/W bis-MGD-type domain. Positions 63, 66, 70, and 115 each coordinate [4Fe-4S] cluster. Residue Cys270 coordinates Mo-bis(molybdopterin guanine dinucleotide).

The protein belongs to the prokaryotic molybdopterin-containing oxidoreductase family. As to quaternary structure, the complex is composed of three subunits: SrdA, SrdB and SrdC. The cofactor is [4Fe-4S] cluster. It depends on Mo-bis(molybdopterin guanine dinucleotide) as a cofactor. Post-translationally, predicted to be exported by the Tat system. The position of the signal peptide cleavage has not been experimentally proven.

The protein localises to the secreted. It carries out the reaction selenite + a quinone + H2O = selenate + a quinol. Functionally, component of the respiratory selenate reductase complex, which catalyzes the reduction of selenate to selenite. SrdA is probably the catalytic subunit that reduces selenate. This chain is Selenate reductase subunit A, found in Mesobacillus selenatarsenatis (strain DSM 18680 / JCM 14380 / FERM P-15431 / SF-1).